Consider the following 1360-residue polypeptide: Ubiquitin carboxyl-terminal hydrolase 19 (1360 aa).

The tract at residues 1–46 (MSAGASATGPRRGPPGLEEATSKKKQKDRANLESKDGDARRVSLPR) is disordered. Topologically, residues 1–1333 (MSAGASATGP…TTPDEGCLRY (1333 aa)) are cytoplasmic. The span at 28 to 46 (DRANLESKDGDARRVSLPR) shows a compositional bias: basic and acidic residues. Residues 51-140 (KDELLLDWRQ…VPLLTWPSLL (90 aa)) enclose the CS 1 domain. Residues 163–239 (PIALEPGSEP…APSFLSDSAT (77 aa)) are disordered. Over residues 170 to 181 (SEPRRAKQEARN) the composition is skewed to basic and acidic residues. Gly residues predominate over residues 189–199 (GEVGSGAGPGT). The residue at position 220 (Ser-220) is a Phosphoserine. Residues 322–424 (LAFVKNDSYE…RQSQRWGGLE (103 aa)) form the CS 2 domain. The interval 432-482 (VGGAKVAVPTGPTPLDSTPPGGGPHPLTGQEEARAVEKEKPKARSEDSGLD) is disordered. A compositionally biased stretch (basic and acidic residues) spans 462–478 (EEARAVEKEKPKARSED). The USP domain maps to 539 to 1256 (TGLVNLGNTC…YAYVLFYRRR (718 aa)). The Nucleophile role is filled by Cys-548. Cys-833, Cys-836, Cys-850, Cys-853, Cys-859, Cys-863, His-871, and Cys-875 together coordinate Zn(2+). The MYND-type zinc finger occupies 833–875 (CAACQRKQQSEEEKLKRCTRCYRVGYCNQFCQKTHWPDHKGLC). Residues 965–988 (DTGAHRVWPPADRGPVPSTSGLSS) are disordered. His-1207 acts as the Proton acceptor in catalysis. Over residues 1259 to 1274 (PVERPPRASHSEHHPD) the composition is skewed to basic and acidic residues. Positions 1259–1281 (PVERPPRASHSEHHPDLGPAAEA) are disordered. A helical membrane pass occupies residues 1334-1354 (FVLGTVAALVALVLNVFYPLV). The Lumenal segment spans residues 1355–1360 (SQSRWR).

In terms of assembly, interacts with RNF123. Interacts with BIRC2/c-IAP1, BIRC3/c-IAP2 and XIAP/BIRC4. Interacts with HIF1A (via N-terminus).

It localises to the endoplasmic reticulum membrane. It carries out the reaction Thiol-dependent hydrolysis of ester, thioester, amide, peptide and isopeptide bonds formed by the C-terminal Gly of ubiquitin (a 76-residue protein attached to proteins as an intracellular targeting signal).. Its function is as follows. Deubiquitinating enzyme that regulates the degradation of various proteins by removing ubiquitin moieties, thereby preventing their proteasomal degradation. Stabilizes RNF123, which promotes CDKN1B degradation and contributes to cell proliferation. Decreases the levels of ubiquitinated proteins during skeletal muscle formation and acts to repress myogenesis. Modulates transcription of major myofibrillar proteins. Also involved in turnover of endoplasmic-reticulum-associated degradation (ERAD) substrates. Mechanistically, deubiquitinates and thereby stabilizes several E3 ligases involved in the ERAD pathway including SYVN1 or MARCHF6. Regulates the stability of other E3 ligases including BIRC2/c-IAP1 and BIRC3/c-IAP2 by preventing their ubiquitination. Required for cells to mount an appropriate response to hypoxia by rescuing HIF1A from degradation in a non-catalytic manner and by mediating the deubiquitination of FUNDC1. Attenuates mitochondrial damage and ferroptosis by targeting and stabilizing NADPH oxidase 4/NOX4. Negatively regulates TNF-alpha- and IL-1beta-triggered NF-kappa-B activation by hydrolyzing 'Lys-27'- and 'Lys-63'-linked polyubiquitin chains from MAP3K7. Modulates also the protein level and aggregation of polyQ-expanded huntingtin/HTT through HSP90AA1. This is Ubiquitin carboxyl-terminal hydrolase 19 (Usp19) from Mus musculus (Mouse).